The following is a 234-amino-acid chain: Orotidine 5'-phosphate decarboxylase (234 aa).

Substrate-binding positions include Asp-10, Lys-32, 59 to 68 (DLKLHDIPTT), Thr-122, Arg-184, Gln-193, Gly-213, and Arg-214. Lys-61 acts as the Proton donor in catalysis.

It belongs to the OMP decarboxylase family. Type 1 subfamily. Homodimer.

The catalysed reaction is orotidine 5'-phosphate + H(+) = UMP + CO2. It participates in pyrimidine metabolism; UMP biosynthesis via de novo pathway; UMP from orotate: step 2/2. In terms of biological role, catalyzes the decarboxylation of orotidine 5'-monophosphate (OMP) to uridine 5'-monophosphate (UMP). The polypeptide is Orotidine 5'-phosphate decarboxylase (Bacillus pumilus (strain SAFR-032)).